A 187-amino-acid chain; its full sequence is Elongation factor P (187 aa).

It belongs to the elongation factor P family.

Its subcellular location is the cytoplasm. It functions in the pathway protein biosynthesis; polypeptide chain elongation. Functionally, involved in peptide bond synthesis. Stimulates efficient translation and peptide-bond synthesis on native or reconstituted 70S ribosomes in vitro. Probably functions indirectly by altering the affinity of the ribosome for aminoacyl-tRNA, thus increasing their reactivity as acceptors for peptidyl transferase. This is Elongation factor P from Rhodococcus jostii (strain RHA1).